The chain runs to 360 residues: Histidinol-phosphate aminotransferase (360 aa).

Lysine 223 is subject to N6-(pyridoxal phosphate)lysine.

The protein belongs to the class-II pyridoxal-phosphate-dependent aminotransferase family. Histidinol-phosphate aminotransferase subfamily. Homodimer. Pyridoxal 5'-phosphate is required as a cofactor.

The enzyme catalyses L-histidinol phosphate + 2-oxoglutarate = 3-(imidazol-4-yl)-2-oxopropyl phosphate + L-glutamate. It functions in the pathway amino-acid biosynthesis; L-histidine biosynthesis; L-histidine from 5-phospho-alpha-D-ribose 1-diphosphate: step 7/9. The protein is Histidinol-phosphate aminotransferase of Bacillus subtilis subsp. natto.